The sequence spans 405 residues: Acetate kinase (405 aa).

Asparagine 7 contributes to the Mg(2+) binding site. An ATP-binding site is contributed by lysine 14. Substrate is bound at residue arginine 99. Aspartate 156 functions as the Proton donor/acceptor in the catalytic mechanism. 215–219 (HLGNG) is an ATP binding site. Glutamate 391 contacts Mg(2+).

It belongs to the acetokinase family. In terms of assembly, homodimer. Mg(2+) serves as cofactor. It depends on Mn(2+) as a cofactor.

It is found in the cytoplasm. The catalysed reaction is acetate + ATP = acetyl phosphate + ADP. Its pathway is metabolic intermediate biosynthesis; acetyl-CoA biosynthesis; acetyl-CoA from acetate: step 1/2. Catalyzes the formation of acetyl phosphate from acetate and ATP. Can also catalyze the reverse reaction. The polypeptide is Acetate kinase (Trichormus variabilis (strain ATCC 29413 / PCC 7937) (Anabaena variabilis)).